Reading from the N-terminus, the 576-residue chain is Formate--tetrahydrofolate ligase (576 aa).

64 to 71 lines the ATP pocket; sequence TPLGEGKT.

This sequence belongs to the formate--tetrahydrofolate ligase family.

The catalysed reaction is (6S)-5,6,7,8-tetrahydrofolate + formate + ATP = (6R)-10-formyltetrahydrofolate + ADP + phosphate. It participates in one-carbon metabolism; tetrahydrofolate interconversion. The sequence is that of Formate--tetrahydrofolate ligase from Aeromonas hydrophila subsp. hydrophila (strain ATCC 7966 / DSM 30187 / BCRC 13018 / CCUG 14551 / JCM 1027 / KCTC 2358 / NCIMB 9240 / NCTC 8049).